Consider the following 314-residue polypeptide: MTTTYVKKFDGNTAALGRTLVLFGGTSSEREVSLRSGAAVLQALQAGGVDAHGLDVQADAIAKIEAFAPDRVFIALHGPGGEDGKMQAVLDWLAIPYTGSDHAASALAMDKLKTKQVWQSVGLVTPEYASLVENSDWQAVLDSLGGQGFVKPAHEGSSIGMSVVSTAQELKAAYEKAAHYDAKVLVERRIVGREFTVAVLNGVALPAIGLKTDHVFYDYDAKYVSNTTQYLCPCGLTQEKEAELQSIAQQAFAAVGCKGWGRVDFMQDEAGNFYLLEVNTVPGMTDHSLVPMAARQSGIEFNELVLEILAQTLV.

One can recognise an ATP-grasp domain in the interval 115–310 (KQVWQSVGLV…FNELVLEILA (196 aa)). Position 141–196 (141–196 (LDSLGGQGFVKPAHEGSSIGMSVVSTAQELKAAYEKAAHYDAKVLVERRIVGREFT)) interacts with ATP. Mg(2+) contacts are provided by Asp264, Glu277, and Asn279.

Belongs to the D-alanine--D-alanine ligase family. Requires Mg(2+) as cofactor. It depends on Mn(2+) as a cofactor.

The protein localises to the cytoplasm. The enzyme catalyses 2 D-alanine + ATP = D-alanyl-D-alanine + ADP + phosphate + H(+). It participates in cell wall biogenesis; peptidoglycan biosynthesis. In terms of biological role, cell wall formation. In Saccharophagus degradans (strain 2-40 / ATCC 43961 / DSM 17024), this protein is D-alanine--D-alanine ligase.